The chain runs to 273 residues: Lactose transport system permease protein LacG (273 aa).

The next 6 membrane-spanning stretches (helical) occupy residues 15 to 35, 77 to 97, 110 to 130, 134 to 154, 182 to 204, and 240 to 260; these read YSVL…MVIG, IALV…YGFE, VILL…FMLM, GLLN…FIIF, FFYI…VFML, and GTVM…FFAM. The region spanning 71-260 is the ABC transmembrane type-1 domain; sequence FWNSVKIALV…LPTLLVFFAM (190 aa).

This sequence belongs to the binding-protein-dependent transport system permease family. MalFG subfamily.

It localises to the cell inner membrane. Its function is as follows. Part of the binding-protein-dependent transport system for lactose. Probably responsible for the translocation of the substrate across the membrane. The sequence is that of Lactose transport system permease protein LacG (lacG) from Rhizobium radiobacter (Agrobacterium tumefaciens).